The sequence spans 309 residues: Ribosomal protein L11 methyltransferase (309 aa).

S-adenosyl-L-methionine-binding residues include T160, G181, D203, and N245.

Belongs to the methyltransferase superfamily. PrmA family.

It localises to the cytoplasm. The catalysed reaction is L-lysyl-[protein] + 3 S-adenosyl-L-methionine = N(6),N(6),N(6)-trimethyl-L-lysyl-[protein] + 3 S-adenosyl-L-homocysteine + 3 H(+). Functionally, methylates ribosomal protein L11. The protein is Ribosomal protein L11 methyltransferase of Caldanaerobacter subterraneus subsp. tengcongensis (strain DSM 15242 / JCM 11007 / NBRC 100824 / MB4) (Thermoanaerobacter tengcongensis).